Consider the following 88-residue polypeptide: Small ribosomal subunit protein uS15 (88 aa).

This sequence belongs to the universal ribosomal protein uS15 family. In terms of assembly, part of the 30S ribosomal subunit. Forms a bridge to the 50S subunit in the 70S ribosome, contacting the 23S rRNA.

Functionally, one of the primary rRNA binding proteins, it binds directly to 16S rRNA where it helps nucleate assembly of the platform of the 30S subunit by binding and bridging several RNA helices of the 16S rRNA. Forms an intersubunit bridge (bridge B4) with the 23S rRNA of the 50S subunit in the ribosome. The polypeptide is Small ribosomal subunit protein uS15 (Metamycoplasma arthritidis (strain 158L3-1) (Mycoplasma arthritidis)).